A 478-amino-acid polypeptide reads, in one-letter code: Flotillin-like protein 1 (478 aa).

Cysteine 35 is lipidated: S-palmitoyl cysteine. Residues 235–277 are a coiled coil; the sequence is ENQREAEVAEANSELAKKKAAWTMAAQVAELEAAKAVALREAE.

The protein belongs to the band 7/mec-2 family. Flotillin subfamily. Post-translationally, may be palmitoylated. As to expression, expressed in all plant organs. Primarily expressed in vascular tissues. No change in spatial expression in root upon inoculation. Expression limited to the nodule vascular tissue.

It is found in the cell membrane. It localises to the membrane. Its subcellular location is the caveola. In terms of biological role, may act as a scaffolding protein within caveolar membranes, functionally participating in formation of caveolae or caveolae-like vesicles. May be involved in nodule formation. This is Flotillin-like protein 1 (FLOT1) from Medicago truncatula (Barrel medic).